The sequence spans 569 residues: Protein misato homolog 1 (569 aa).

Phosphoserine occurs at positions 41 and 495.

The protein belongs to the misato family.

The protein localises to the mitochondrion outer membrane. The protein resides in the cytoplasm. Involved in the regulation of mitochondrial distribution and morphology. Required for mitochondrial fusion and mitochondrial network formation. The sequence is that of Protein misato homolog 1 (MSTO1) from Macaca fascicularis (Crab-eating macaque).